The following is a 149-amino-acid chain: Transcription antitermination protein NusB (149 aa).

The protein belongs to the NusB family.

Involved in transcription antitermination. Required for transcription of ribosomal RNA (rRNA) genes. Binds specifically to the boxA antiterminator sequence of the ribosomal RNA (rrn) operons. The sequence is that of Transcription antitermination protein NusB from Caulobacter vibrioides (strain ATCC 19089 / CIP 103742 / CB 15) (Caulobacter crescentus).